The sequence spans 340 residues: Phosphoribosylformylglycinamidine cyclo-ligase (340 aa).

This sequence belongs to the AIR synthase family.

It localises to the cytoplasm. It catalyses the reaction 2-formamido-N(1)-(5-O-phospho-beta-D-ribosyl)acetamidine + ATP = 5-amino-1-(5-phospho-beta-D-ribosyl)imidazole + ADP + phosphate + H(+). It participates in purine metabolism; IMP biosynthesis via de novo pathway; 5-amino-1-(5-phospho-D-ribosyl)imidazole from N(2)-formyl-N(1)-(5-phospho-D-ribosyl)glycinamide: step 2/2. The polypeptide is Phosphoribosylformylglycinamidine cyclo-ligase (Streptococcus uberis (strain ATCC BAA-854 / 0140J)).